A 945-amino-acid polypeptide reads, in one-letter code: Leucine--tRNA ligase (945 aa).

The 'HIGH' region signature appears at 43–53 (PYPNGAIHIGH). Positions 638-642 (KMSKS) match the 'KMSKS' region motif. Residue Lys-641 coordinates ATP.

This sequence belongs to the class-I aminoacyl-tRNA synthetase family.

It is found in the cytoplasm. It catalyses the reaction tRNA(Leu) + L-leucine + ATP = L-leucyl-tRNA(Leu) + AMP + diphosphate. This chain is Leucine--tRNA ligase, found in Pyrobaculum neutrophilum (strain DSM 2338 / JCM 9278 / NBRC 100436 / V24Sta) (Thermoproteus neutrophilus).